A 264-amino-acid chain; its full sequence is ATP synthase subunit a (264 aa).

6 helical membrane-spanning segments follow: residues 29 to 49, 90 to 110, 134 to 154, 177 to 197, 208 to 228, and 235 to 255; these read TWHIDSLFFSVGLGVLFLWIF, IAPLALTIFMWVFMMNFMDMI, DVNITFSLAIGVFVLIIYYSI, IPVNLLLETVTLIAKPISLAL, LIFILIALMYGTNLLLSSLGV, and LIFHILVITLQAFIFMMLTIV.

It belongs to the ATPase A chain family. In terms of assembly, F-type ATPases have 2 components, CF(1) - the catalytic core - and CF(0) - the membrane proton channel. CF(1) has five subunits: alpha(3), beta(3), gamma(1), delta(1), epsilon(1). CF(0) has three main subunits: a(1), b(2) and c(9-12). The alpha and beta chains form an alternating ring which encloses part of the gamma chain. CF(1) is attached to CF(0) by a central stalk formed by the gamma and epsilon chains, while a peripheral stalk is formed by the delta and b chains.

It is found in the cell inner membrane. Key component of the proton channel; it plays a direct role in the translocation of protons across the membrane. The protein is ATP synthase subunit a of Shewanella oneidensis (strain ATCC 700550 / JCM 31522 / CIP 106686 / LMG 19005 / NCIMB 14063 / MR-1).